Here is a 369-residue protein sequence, read N- to C-terminus: Glycine oxidase (369 aa).

FAD contacts are provided by residues 14-15, 34-35, 42-43, 47-49, and Val174; these read II, ES, TT, and AGM. Residues Arg302 and Arg329 each coordinate substrate. 327-333 serves as a coordination point for FAD; that stretch reads HFRNGIL.

Belongs to the DAO family. ThiO subfamily. Homotetramer. The cofactor is FAD.

Its subcellular location is the cytoplasm. It carries out the reaction glycine + O2 + H2O = glyoxylate + H2O2 + NH4(+). It catalyses the reaction N-ethylglycine + O2 + H2O = ethylamine + glyoxylate + H2O2. The catalysed reaction is sarcosine + O2 + H2O = methylamine + glyoxylate + H2O2. The enzyme catalyses D-alanine + O2 + H2O = pyruvate + H2O2 + NH4(+). It carries out the reaction glyphosate + O2 + H2O = aminomethylphosphonate + glyoxylate + H2O2 + H(+). It functions in the pathway cofactor biosynthesis; thiamine diphosphate biosynthesis. Its activity is regulated as follows. Is competitively inhibited by glycolate. In terms of biological role, catalyzes the FAD-dependent oxidative deamination of various amines and D-amino acids to yield the corresponding alpha-keto acids, ammonia/amine, and hydrogen peroxide. Oxidizes sarcosine (N-methylglycine), N-ethylglycine and glycine. Can also oxidize the herbicide glyphosate (N-phosphonomethylglycine). Displays lower activities on D-alanine, D-valine, D-proline and D-methionine. Does not act on L-amino acids and other D-amino acids. Is essential for thiamine biosynthesis since the oxidation of glycine catalyzed by ThiO generates the glycine imine intermediate (dehydroglycine) required for the biosynthesis of the thiazole ring of thiamine pyrophosphate. The polypeptide is Glycine oxidase (Bacillus subtilis (strain 168)).